Consider the following 364-residue polypeptide: Aminomethyltransferase (364 aa).

Belongs to the GcvT family. As to quaternary structure, the glycine cleavage system is composed of four proteins: P, T, L and H.

The enzyme catalyses N(6)-[(R)-S(8)-aminomethyldihydrolipoyl]-L-lysyl-[protein] + (6S)-5,6,7,8-tetrahydrofolate = N(6)-[(R)-dihydrolipoyl]-L-lysyl-[protein] + (6R)-5,10-methylene-5,6,7,8-tetrahydrofolate + NH4(+). Its function is as follows. The glycine cleavage system catalyzes the degradation of glycine. This is Aminomethyltransferase from Escherichia coli O81 (strain ED1a).